A 173-amino-acid polypeptide reads, in one-letter code: Bilin biosynthesis protein PecF (173 aa).

It belongs to the CpcE/RpcE/PecE family.

Functionally, an enzyme involved in the biosynthesis of bilin. In Nostoc sp. (strain PCC 7120 / SAG 25.82 / UTEX 2576), this protein is Bilin biosynthesis protein PecF (pecF).